The chain runs to 258 residues: Probable phthiotriol/phenolphthiotriol dimycocerosates methyltransferase 2 (258 aa).

The protein belongs to the methyltransferase superfamily. Phthiotriol/phenolphthiotriol dimycocerosates methyltransferase family.

Catalyzes the methylation of the lipid moiety of the intermediate compounds phthiotriol and glycosylated phenolphthiotriol dimycoserosates to form phthiocerol dimycocerosates (DIM A) and glycosylated phenolphthiocerol dimycocerosates (PGL). This chain is Probable phthiotriol/phenolphthiotriol dimycocerosates methyltransferase 2, found in Mycobacterium ulcerans (strain Agy99).